We begin with the raw amino-acid sequence, 622 residues long: Serine/threonine-protein kinase PknB (622 aa).

The Cytoplasmic portion of the chain corresponds to methionine 1–tryptophan 328. The Protein kinase domain maps to tyrosine 11–isoleucine 273. Residues leucine 17–valine 25, lysine 40, and glutamate 93–valine 95 contribute to the ATP site. Aspartate 138 (proton acceptor) is an active-site residue. ATP contacts are provided by residues lysine 140–asparagine 143 and aspartate 156. Mg(2+) is bound by residues asparagine 143 and aspartate 156. 2 positions are modified to phosphoserine; by autocatalysis: serine 166 and serine 168. 3 positions are modified to phosphothreonine; by autocatalysis: threonine 170, threonine 172, and threonine 308. The helical transmembrane segment at valine 329–phenylalanine 349 threads the bilayer. Over glycine 350 to glutamine 622 the chain is Extracellular. PASTA domains follow at residues asparagine 352–threonine 418, glycine 419–serine 486, glycine 487–lysine 553, and glycine 554–glutamine 622. Residues arginine 381–alanine 404 form a disordered region.

The protein belongs to the protein kinase superfamily. Ser/Thr protein kinase family. As to quaternary structure, homodimer. Autophosphorylated. Dephosphorylated by PstP.

Its subcellular location is the cell membrane. The catalysed reaction is L-seryl-[protein] + ATP = O-phospho-L-seryl-[protein] + ADP + H(+). It carries out the reaction L-threonyl-[protein] + ATP = O-phospho-L-threonyl-[protein] + ADP + H(+). Protein kinase that regulates many aspects of mycobacterial physiology. Is a key component of a signal transduction pathway that regulates cell growth, cell shape and cell division via phosphorylation of target proteins. In Mycobacterium leprae (strain TN), this protein is Serine/threonine-protein kinase PknB (pknB).